The following is a 623-amino-acid chain: MWVALGMLWLLALGGPHQAWSFCPSQCSCSLHILSDGSKARTVVCSDPDLTLPPASIPPDTCKLRLERTAIRRVPGETFRPLSRLEQLWLPYNALSELSTLMLRGLRRLRELRLPGNHLVTFPWAALKDTPQLQLLDLQANRLSTLPPEAVHFLENLTFLDLSNNQLMRLPEELLDTWAHLKTGPYLSSRRTRLVLGLQDNPWVCDCRLYDLVHLLDGWASNLIFIEARLRCGSPRSLAGVAFSQLELRKCQSPELRPGVTSIISPLGSTVLLRCGATGIPGPEMSWRRANGRPLNGTVHQEVSSDGSSWTLLDLPVVSLFDSGDYICQAKNFLGASETLISLIVTEPQTSTEYTGIPGALWARTGEGAEAAAYNNKLVARHVPHVPEPVALATKPSVPSIKEELPLQNFQMDVPGEFSREPSEHQETQMVRSLKVVGDTYHSVSLVWKAPQAGNTTAFSVLYAVFGQRDMRRMTVEAGKTSVTIEGLAPKTKYVACVCVRGLVPTKEQCVIFSTDEVVDAEGTQRLINMVVISVAAIIALPPTLLVCCGALRRRCHKCRAGGSAEASGAYVNLERLGHSEDGSEELSRSSLSEADRLLSARSSLDSQVLGVRGGRRINEYFC.

A signal peptide spans 1 to 21 (MWVALGMLWLLALGGPHQAWS). An LRRNT domain is found at 22–59 (FCPSQCSCSLHILSDGSKARTVVCSDPDLTLPPASIPP). Residues 22–526 (FCPSQCSCSL…EVVDAEGTQR (505 aa)) are Lumenal-facing. LRR repeat units lie at residues 60–81 (DTCK…TFRP), 84–105 (RLEQ…MLRG), 108–128 (RLRE…AALK), 132–153 (QLQL…AVHF), and 156–177 (NLTF…LLDT). Asn-156 is a glycosylation site (N-linked (GlcNAc...) asparagine). The LRRCT domain maps to 201-253 (NPWVCDCRLYDLVHLLDGWASNLIFIEARLRCGSPRSLAGVAFSQLELRKCQS). One can recognise an Ig-like C2-type domain in the interval 266–332 (PLGSTVLLRC…SGDYICQAKN (67 aa)). A disulfide bond links Cys-275 and Cys-328. N-linked (GlcNAc...) asparagine glycosylation is found at Asn-296 and Asn-455. One can recognise a Fibronectin type-III domain in the interval 430 to 518 (MVRSLKVVGD…QCVIFSTDEV (89 aa)). The LRR 6 repeat unit spans residues 525 to 548 (QRLINMVVISVAAIIALPPTLLVC). A helical transmembrane segment spans residues 527 to 547 (LINMVVISVAAIIALPPTLLV). Over 548-623 (CCGALRRRCH…GGRRINEYFC (76 aa)) the chain is Cytoplasmic.

As to quaternary structure, homodimer. Interacts with LRIT2; may form a heterodimer with LRIT2. Interacts (via its N-terminal extracellular domain) with metabotropic glutamate receptor GRM6. Interacts (via its extreme C-terminus) with the scaffold protein FRMPD2 (via the third PDZ domain); the interaction leads to their colocalization in photoreceptor synapses. As to expression, retina, outer segments of photoreceptor cells.

The protein resides in the endoplasmic reticulum membrane. It localises to the cell projection. The protein localises to the dendrite. Functionally, photoreceptor synaptic protein essential for normal vision. Involved in synapse formation in cone photoreceptor cells. The polypeptide is Leucine-rich repeat, immunoglobulin-like domain and transmembrane domain-containing protein 1 (Lrit1) (Rattus norvegicus (Rat)).